A 1485-amino-acid chain; its full sequence is Glutamate receptor ionotropic, NMDA 2B (1485 aa).

Positions 1–26 are cleaved as a signal peptide; sequence MKPRAECCSPKFWLVLAVLAVSGSRA. Topologically, residues 27–557 are extracellular; it reads RSQKSPPSIG…SAFLEPFSAD (531 aa). Asn74 carries N-linked (GlcNAc...) asparagine glycosylation. Cys86 and Cys321 are oxidised to a cystine. Zn(2+) contacts are provided by His127 and Glu284. Asn341, Asn348, Asn444, and Asn491 each carry an N-linked (GlcNAc...) asparagine glycan. Cystine bridges form between Cys429-Cys456 and Cys436-Cys457. L-glutamate is bound by residues Thr514 and Arg519. N-linked (GlcNAc...) asparagine glycosylation is present at Asn542. Residues 558–576 traverse the membrane as a helical segment; it reads VWVMMFVMLLIVSAVAVFV. Residues 577–603 lie on the Cytoplasmic side of the membrane; it reads FEYFSPVGYNRCLADGREPGGPSFTIG. An intramembrane region (discontinuously helical) is located at residues 604 to 623; sequence KAIWLLWGLVFNNSVPVQNP. The pore-forming stretch occupies residues 604–623; that stretch reads KAIWLLWGLVFNNSVPVQNP. Topologically, residues 624 to 630 are cytoplasmic; that stretch reads KGTTSKI. The helical transmembrane segment at 631 to 646 threads the bilayer; the sequence is MVSVWAFFAVIFLASY. Residues 647–817 lie on the Extracellular side of the membrane; sequence TANLAAFMIQ…VMSSQLDIDN (171 aa). An N-linked (GlcNAc...) asparagine glycan is attached at Asn688. L-glutamate contacts are provided by residues 690 to 691 and Asp732; that span reads ST. Cys746 and Cys801 are disulfide-bonded. Residues 818–837 form a helical membrane-spanning segment; that stretch reads MAGVFYMLGAAMALSLITFI. At 838-1485 the chain is on the cytoplasmic side; sequence CEHLFYWQFR…EKLSSIESDV (648 aa). Ser882, Ser886, Ser917, and Ser920 each carry phosphoserine. A phosphotyrosine mark is found at Tyr962 and Tyr1039. Residues Ser1058, Ser1061, and Ser1064 each carry the phosphoserine modification. The interval 1074-1097 is disordered; it reads EGNAAKRRKQQYKDSLKKRPASAK. Phosphotyrosine is present on residues Tyr1109 and Tyr1133. A Phosphoserine modification is found at Ser1143. Tyr1155 carries the post-translational modification Phosphotyrosine. The segment at 1162–1194 is disordered; that stretch reads FKRDSVSGGGPCTNRSHLKHGAGDKHGVVSGVP. 2 positions are modified to phosphoserine: Ser1255 and Ser1259. Residues 1269–1278 show a composition bias toward low complexity; it reads PVAVPSNAPS. The tract at residues 1269-1302 is disordered; that stretch reads PVAVPSNAPSTKYPQSPTNSKAQKKTRNKLRRQH. Polar residues predominate over residues 1280 to 1289; the sequence is KYPQSPTNSK. The span at 1290-1301 shows a compositional bias: basic residues; it reads AQKKTRNKLRRQ. An interaction with DAPK1 region spans residues 1292-1304; sequence KKTRNKLRRQHSY. Ser1303 bears the Phosphoserine; by DAPK1 mark. Residue Tyr1475 is modified to Phosphotyrosine. The short motif at 1483-1485 is the PDZ-binding element; that stretch reads SDV.

This sequence belongs to the glutamate-gated ion channel (TC 1.A.10.1) family. NR2B/GRIN2B subfamily. Heterotetramer. Forms heterotetrameric channels composed of two GluN1/zeta subunits (GRIN1), and two identical GluN2/epsilon subunits (GRIN2A, GRIN2B, GRIN2C or GRIN2D) or GluN3 subunits (GRIN3A or GRIN3B) (in vitro). Can also form heterotetrameric channels that contain at least two GluN1 subunits and at least two different GluN2 subunits (or a combination of one GluN2 and one GluN3 subunits) (in vitro). In vivo, the subunit composition may depend on the expression levels of the different subunits. Found in a complex with GRIN1, GRIN3A and PPP2CB. Found in a complex with GRIN1 and GRIN3B. Interacts with MAGI3. Interacts with HIP1 and Neto1. Interacts with PDZ domains of PATJ, DLG3 and DLG4. Interacts with DAPK1. Found in a complex with GRIN1 and PRR7. Interacts with PRR7. Interacts with CAMK2A. Interacts with ARC; preventing ARC oligomerization. Interacts with TMEM25. Interacts (via the extreme C-terminus) with FRMPD2 (via the second PDZ domain); the interaction is direct and is likely to promote NMDAR-mediated neural signal transmission. Interacts with FAM81A; the interaction facilitates condensate formation via liquid-liquid phase separation. Post-translationally, phosphorylated on tyrosine residues. Phosphorylation at Ser-1303 by DAPK1 enhances synaptic NMDA receptor channel activity.

The protein resides in the cell membrane. Its subcellular location is the postsynaptic cell membrane. It is found in the cell projection. It localises to the dendrite. The protein localises to the late endosome. The protein resides in the lysosome. Its subcellular location is the cytoplasm. It is found in the cytoskeleton. It catalyses the reaction Ca(2+)(in) = Ca(2+)(out). The enzyme catalyses Na(+)(in) = Na(+)(out). The catalysed reaction is K(+)(in) = K(+)(out). Its function is as follows. Component of N-methyl-D-aspartate (NMDA) receptors (NMDARs) that function as heterotetrameric, ligand-gated cation channels with high calcium permeability and voltage-dependent block by Mg(2+). Participates in synaptic plasticity for learning and memory formation by contributing to the long-term depression (LTD) of hippocampus membrane currents. Channel activation requires binding of the neurotransmitter L-glutamate to the GluN2 subunit, glycine or D-serine binding to the GluN1 subunit, plus membrane depolarization to eliminate channel inhibition by Mg(2+). NMDARs mediate simultaneously the potasium efflux and the influx of calcium and sodium. Each GluN2 subunit confers differential attributes to channel properties, including activation, deactivation and desensitization kinetics, pH sensitivity, Ca2(+) permeability, and binding to allosteric modulators. In concert with DAPK1 at extrasynaptic sites, acts as a central mediator for stroke damage. Its phosphorylation at Ser-1303 by DAPK1 enhances synaptic NMDA receptor channel activity inducing injurious Ca2+ influx through them, resulting in an irreversible neuronal death. The sequence is that of Glutamate receptor ionotropic, NMDA 2B from Canis lupus familiaris (Dog).